A 142-amino-acid chain; its full sequence is Large-conductance mechanosensitive channel (142 aa).

Helical transmembrane passes span 14–34 (VMDL…VTSV), 38–58 (LVMP…NYFL), and 82–102 (GSFI…FLLV).

It belongs to the MscL family. As to quaternary structure, homopentamer.

Its subcellular location is the cell inner membrane. Channel that opens in response to stretch forces in the membrane lipid bilayer. May participate in the regulation of osmotic pressure changes within the cell. This Sinorhizobium fredii (strain NBRC 101917 / NGR234) protein is Large-conductance mechanosensitive channel.